A 288-amino-acid polypeptide reads, in one-letter code: Release factor glutamine methyltransferase (288 aa).

2 residues coordinate S-adenosyl-L-methionine: Asp-142 and Asn-186. Substrate is bound at residue 186–189 (NPPY).

Belongs to the protein N5-glutamine methyltransferase family. PrmC subfamily.

It catalyses the reaction L-glutaminyl-[peptide chain release factor] + S-adenosyl-L-methionine = N(5)-methyl-L-glutaminyl-[peptide chain release factor] + S-adenosyl-L-homocysteine + H(+). Functionally, methylates the class 1 translation termination release factors RF1/PrfA and RF2/PrfB on the glutamine residue of the universally conserved GGQ motif. The protein is Release factor glutamine methyltransferase of Mycobacterium leprae (strain TN).